Here is a 396-residue protein sequence, read N- to C-terminus: Probable sugar efflux transporter (396 aa).

The next 12 helical transmembrane spans lie at Val15–Leu35, Val50–Leu70, Leu81–Phe101, Val103–Ala123, Ala136–Ile156, Thr169–Pro189, Pro209–Tyr229, Phe246–Gly266, Ser275–Ala295, Leu301–Val321, Val333–Gly353, and Ala364–Phe384.

It belongs to the major facilitator superfamily. SotB (TC 2.A.1.2) family.

It is found in the cell inner membrane. In terms of biological role, involved in the efflux of sugars. The physiological role may be the reduction of the intracellular concentration of toxic sugars or sugar metabolites. This is Probable sugar efflux transporter from Salmonella schwarzengrund (strain CVM19633).